The primary structure comprises 210 residues: Urease accessory protein UreG (210 aa).

14 to 21 (GPVGSGKT) lines the GTP pocket.

It belongs to the SIMIBI class G3E GTPase family. UreG subfamily. In terms of assembly, homodimer. UreD, UreF and UreG form a complex that acts as a GTP-hydrolysis-dependent molecular chaperone, activating the urease apoprotein by helping to assemble the nickel containing metallocenter of UreC. The UreE protein probably delivers the nickel.

It is found in the cytoplasm. In terms of biological role, facilitates the functional incorporation of the urease nickel metallocenter. This process requires GTP hydrolysis, probably effectuated by UreG. The sequence is that of Urease accessory protein UreG from Rhodopseudomonas palustris (strain BisB5).